Consider the following 292-residue polypeptide: MTVGTALPPPELRNCPAPAKLNLFLHVTGRRPDGYHTLQTVFQLIDWSDTLHFHRRDDGVITRVTDIPGVPADTDLVVRAARAMQAASGTRFGVDIAIDKILPMGGGIGGGSSDAATTLLALNRLWGVNLPREELMRIGLSLGADVPVFVFGQNAFAEGVGEELTPVALPDSWFVVIHPRQHVPTAAIFSDERLTRNSPISIVADFAACTNKFAFGRNDLETIATAKFGEVARALEWLKNYSPHARMTGSGACVFARFEDEQTAQRVMERLPSEWDGRCVKSLSHHPLATFA.

Residue Lys20 is part of the active site. 103–113 contacts ATP; the sequence is PMGGGIGGGSS. Asp145 is an active-site residue.

This sequence belongs to the GHMP kinase family. IspE subfamily.

It carries out the reaction 4-CDP-2-C-methyl-D-erythritol + ATP = 4-CDP-2-C-methyl-D-erythritol 2-phosphate + ADP + H(+). Its pathway is isoprenoid biosynthesis; isopentenyl diphosphate biosynthesis via DXP pathway; isopentenyl diphosphate from 1-deoxy-D-xylulose 5-phosphate: step 3/6. In terms of biological role, catalyzes the phosphorylation of the position 2 hydroxy group of 4-diphosphocytidyl-2C-methyl-D-erythritol. The sequence is that of 4-diphosphocytidyl-2-C-methyl-D-erythritol kinase from Cupriavidus metallidurans (strain ATCC 43123 / DSM 2839 / NBRC 102507 / CH34) (Ralstonia metallidurans).